The following is a 130-amino-acid chain: Lysozyme C, kidney isozyme (130 aa).

The region spanning 1-130 (KVFERCELAR…LTSYIQGCGV (130 aa)) is the C-type lysozyme domain. 4 disulfide bridges follow: C6–C128, C30–C116, C65–C81, and C77–C95. Catalysis depends on residues E35 and D53.

This sequence belongs to the glycosyl hydrolase 22 family. Monomer.

Its subcellular location is the secreted. It carries out the reaction Hydrolysis of (1-&gt;4)-beta-linkages between N-acetylmuramic acid and N-acetyl-D-glucosamine residues in a peptidoglycan and between N-acetyl-D-glucosamine residues in chitodextrins.. Lysozymes have primarily a bacteriolytic function; those in tissues and body fluids are associated with the monocyte-macrophage system and enhance the activity of immunoagents. The polypeptide is Lysozyme C, kidney isozyme (Ovis aries (Sheep)).